Reading from the N-terminus, the 397-residue chain is Tryptophan synthase beta chain (397 aa).

Lys87 carries the post-translational modification N6-(pyridoxal phosphate)lysine.

The protein belongs to the TrpB family. Tetramer of two alpha and two beta chains. Requires pyridoxal 5'-phosphate as cofactor.

It carries out the reaction (1S,2R)-1-C-(indol-3-yl)glycerol 3-phosphate + L-serine = D-glyceraldehyde 3-phosphate + L-tryptophan + H2O. It functions in the pathway amino-acid biosynthesis; L-tryptophan biosynthesis; L-tryptophan from chorismate: step 5/5. Its function is as follows. The beta subunit is responsible for the synthesis of L-tryptophan from indole and L-serine. This chain is Tryptophan synthase beta chain, found in Enterobacter sp. (strain 638).